Here is a 155-residue protein sequence, read N- to C-terminus: Desiccation-related protein clone PCC6-19 (155 aa).

The disordered stretch occupies residues 1–155 (MAQFGGEKYG…IKEKLPGGQH (155 aa)). Gly residues-rich tracts occupy residues 27-39 (AHRGGGIMGGGQQ) and 47-76 (GVLGHGTAGQHGTTGGGLGHGTAGTGGALG). Positions 83–92 (GSSSSSSSSE) are enriched in low complexity. A compositionally biased stretch (polar residues) spans 118-135 (TTTDQQQYGTAATHGQAQ). Positions 136–155 (QHEKKGIMDKIKEKLPGGQH) are enriched in basic and acidic residues.

This sequence belongs to the plant dehydrin family.

The protein is Desiccation-related protein clone PCC6-19 of Craterostigma plantagineum (Blue gem).